Reading from the N-terminus, the 224-residue chain is Perchlorate reductase assembly chaperone protein (224 aa).

It belongs to the type II DMSO reductase enzyme chaperone family.

Its subcellular location is the cytoplasm. Its function is as follows. May function as a system-specific molybdenum chaperone protein essential for the assembly of the perchlorate reductase PcrAB complex prior to its periplasmic translocation via the Tat pathway. This is Perchlorate reductase assembly chaperone protein (pcrD) from Dechloromonas aromatica (strain RCB).